A 356-amino-acid chain; its full sequence is Tyrosine recombinase XerS (356 aa).

The Core-binding (CB) domain occupies 16-121 (IMPWYVLDYY…ALSSLYKYLT (106 aa)). The Tyr recombinase domain maps to 169-354 (AFLDYVDKEY…VNDEQKNALD (186 aa)). Catalysis depends on residues Arg-210, Lys-234, His-306, Arg-309, and His-332. Catalysis depends on Tyr-341, which acts as the O-(3'-phospho-DNA)-tyrosine intermediate.

The protein belongs to the 'phage' integrase family. XerS subfamily.

It localises to the cytoplasm. Its activity is regulated as follows. FtsK is required for recombination. Functionally, site-specific tyrosine recombinase, which acts by catalyzing the cutting and rejoining of the recombining DNA molecules. Essential to convert dimers of the bacterial chromosome into monomers to permit their segregation at cell division. This is Tyrosine recombinase XerS from Streptococcus equi subsp. zooepidemicus (strain H70).